The sequence spans 185 residues: Ribosome-recycling factor (185 aa).

Belongs to the RRF family.

The protein resides in the cytoplasm. Functionally, responsible for the release of ribosomes from messenger RNA at the termination of protein biosynthesis. May increase the efficiency of translation by recycling ribosomes from one round of translation to another. This Campylobacter jejuni (strain RM1221) protein is Ribosome-recycling factor.